A 170-amino-acid chain; its full sequence is 3-dehydroquinate dehydratase (170 aa).

Tyrosine 22 acts as the Proton acceptor in catalysis. Residues asparagine 76, histidine 82, and aspartate 89 each contribute to the substrate site. The active-site Proton donor is the histidine 102. Substrate contacts are provided by residues 103-104 (LT) and arginine 113.

Belongs to the type-II 3-dehydroquinase family. As to quaternary structure, homododecamer.

The catalysed reaction is 3-dehydroquinate = 3-dehydroshikimate + H2O. It functions in the pathway metabolic intermediate biosynthesis; chorismate biosynthesis; chorismate from D-erythrose 4-phosphate and phosphoenolpyruvate: step 3/7. Its function is as follows. Catalyzes a trans-dehydration via an enolate intermediate. The chain is 3-dehydroquinate dehydratase (aroQ) from Helicobacter pylori (strain J99 / ATCC 700824) (Campylobacter pylori J99).